Consider the following 878-residue polypeptide: Phosphoenolpyruvate carboxylase (878 aa).

Active-site residues include H138 and K544.

This sequence belongs to the PEPCase type 1 family. The cofactor is Mg(2+).

The catalysed reaction is oxaloacetate + phosphate = phosphoenolpyruvate + hydrogencarbonate. Its function is as follows. Forms oxaloacetate, a four-carbon dicarboxylic acid source for the tricarboxylic acid cycle. The sequence is that of Phosphoenolpyruvate carboxylase from Psychromonas ingrahamii (strain DSM 17664 / CCUG 51855 / 37).